The primary structure comprises 160 residues: Transcription elongation factor GreA (160 aa).

Residues 11–38 are a coiled coil; that stretch reads YDRLMKELERLKSERPAIIQAIKEAREE.

It belongs to the GreA/GreB family.

Functionally, necessary for efficient RNA polymerase transcription elongation past template-encoded arresting sites. The arresting sites in DNA have the property of trapping a certain fraction of elongating RNA polymerases that pass through, resulting in locked ternary complexes. Cleavage of the nascent transcript by cleavage factors such as GreA or GreB allows the resumption of elongation from the new 3'terminus. GreA releases sequences of 2 to 3 nucleotides. This chain is Transcription elongation factor GreA, found in Nitratidesulfovibrio vulgaris (strain DSM 19637 / Miyazaki F) (Desulfovibrio vulgaris).